A 299-amino-acid polypeptide reads, in one-letter code: Beta-lactamase VEB-1 (299 aa).

The signal sequence occupies residues 1 to 23 (MKIVKRILLVLLSLFFTIVYSNA). Residue S68 is the Nucleophile; acyl-ester intermediate of the active site. A beta-lactam contacts are provided by K71, S131, and E167. E167 acts as the Proton acceptor in catalysis.

Belongs to the class-A beta-lactamase family.

It catalyses the reaction a beta-lactam + H2O = a substituted beta-amino acid. With respect to regulation, inhibited by the beta-lactamase-blocking agent clavulanic acid. Class A beta-lactamase which confers resistance to the beta-lactam antibiotics, including penicillins and cephalosporins, in E.coli strain JM109. Acts via hydrolysis of the beta-lactam ring. Has penicillin-, and cephalosporin-hydrolyzing activities. The polypeptide is Beta-lactamase VEB-1 (Pseudomonas aeruginosa).